Here is a 371-residue protein sequence, read N- to C-terminus: MSKRDYYEVLGLSKGASTDEIKKAYRRLAKKYHPDVSKEENAIEKFKEVQEAYEVLSDDQKRAQYDQFGHAGANQGFGGFGGGGDFGGGFGFEDIFSSFFGGGGGRRRDPNAPRQGADLQYQVTLDFEEAIFGKELNVEIPVEDPCDTCKGSGAKPGTSKETCKHCSGSGQVSVEQNTPFGRIVNRQACGHCSGTGQIIKEKCTTCHGSSKVRKRKKINVKIPAGIDNGQQIRVSGKGEAGVNGGPARDLYVVVHVRNHEFFEREGDHIICEMPLTFAQMALGDEVEVPTVHGKVKLKIPAGTQTGTEFRLKGKGAPNVRGYGQGDQYVVVRVVVPTKLTSQQKDLLREFAGQEEQDDSLFGKLKRAFKGE.

One can recognise a J domain in the interval 5 to 69 (DYYEVLGLSK…QKRAQYDQFG (65 aa)). The CR-type zinc-finger motif lies at 133 to 215 (GKELNVEIPV…CHGSSKVRKR (83 aa)). Residues cysteine 146, cysteine 149, cysteine 163, cysteine 166, cysteine 189, cysteine 192, cysteine 203, and cysteine 206 each coordinate Zn(2+). 4 CXXCXGXG motif repeats span residues 146-153 (CDTCKGSG), 163-170 (CKHCSGSG), 189-196 (CGHCSGTG), and 203-210 (CTTCHGSS).

This sequence belongs to the DnaJ family. As to quaternary structure, homodimer. It depends on Zn(2+) as a cofactor.

It is found in the cytoplasm. Functionally, participates actively in the response to hyperosmotic and heat shock by preventing the aggregation of stress-denatured proteins and by disaggregating proteins, also in an autonomous, DnaK-independent fashion. Unfolded proteins bind initially to DnaJ; upon interaction with the DnaJ-bound protein, DnaK hydrolyzes its bound ATP, resulting in the formation of a stable complex. GrpE releases ADP from DnaK; ATP binding to DnaK triggers the release of the substrate protein, thus completing the reaction cycle. Several rounds of ATP-dependent interactions between DnaJ, DnaK and GrpE are required for fully efficient folding. Also involved, together with DnaK and GrpE, in the DNA replication of plasmids through activation of initiation proteins. This chain is Chaperone protein DnaJ, found in Bacillus cereus (strain ATCC 14579 / DSM 31 / CCUG 7414 / JCM 2152 / NBRC 15305 / NCIMB 9373 / NCTC 2599 / NRRL B-3711).